A 417-amino-acid chain; its full sequence is Divinyl chlorophyllide a 8-vinyl-reductase, chloroplastic (417 aa).

The transit peptide at 1–49 (MSLCSSFNVFASYSPKPKTIFKDSKFISQFQVKSSPLASTFHTNESSTS) directs the protein to the chloroplast.

Highly expressed in leaves, stems and flower buds. Detected in roots.

It localises to the plastid. Its subcellular location is the chloroplast. The catalysed reaction is protochlorophyllide a + NADP(+) = 3,8-divinyl protochlorophyllide a + NADPH + H(+). It participates in porphyrin-containing compound metabolism; chlorophyll biosynthesis. In terms of biological role, catalyzes the conversion of divinyl chlorophyllide to monovinyl chlorophyllide. Reduces the 8-vinyl group of the tetrapyrrole to an ethyl group using NADPH as the reductant. The best substrate is (3,8-divinyl)-chlorophyllide a (DV-Chlidea). Very low activity with (3,8-divinyl)-protochlorophyllide a (DV-Pchlidea) and (3,8-divinyl)-magnesium-protoporphyrin IX monomethyl ester (DV-MPE). No activity with (3,8-divinyl)-chlorophyllide b (DV-Chlideb), (3,8-divinyl)-magnesium-protoporphyrin IX (DV-Mg-Proto) and either (3,8-divinyl)-chlorophyll a (DV-Chla) or b (DV-Chlb). The protein is Divinyl chlorophyllide a 8-vinyl-reductase, chloroplastic (DVR) of Arabidopsis thaliana (Mouse-ear cress).